We begin with the raw amino-acid sequence, 496 residues long: Fibronectin type III and SPRY domain-containing protein 1 (496 aa).

The stretch at 4 to 99 (QREALRKIIK…ALESSEELLE (96 aa)) forms a coiled coil. Residues 105 to 162 (LQAMDSEDFPQAAKQIKDGVTMAPAFRLSLKAKVSDNMSHLMVDFAQERQMLQALKFL) enclose the COS domain. Positions 164-268 (VPSAPVIDLA…EPVTLETPAF (105 aa)) constitute a Fibronectin type-III domain. The B30.2/SPRY domain maps to 268–477 (FMFRLDASTS…VTTGLQVPSA (210 aa)). Residues 301–336 (KAREKDGKGRTASPINSPARGTPSPKRMPSGRGGRD) are disordered. Residues Arg310 and Arg320 each carry the omega-N-methylarginine modification.

As to quaternary structure, oligomerization is required for binding to microtubules. Highly expressed in brain tissues, including cerebellum, cerebral cortex, medulla, occipital pole, frontal lobe, temporal lobe and putamen. Lower expression in spinal cord.

The protein localises to the cytoplasm. The protein resides in the cytoskeleton. Its subcellular location is the microtubule organizing center. It localises to the centrosome. It is found in the nucleus. The protein localises to the cleavage furrow. Functionally, may be involved in microtubule organization and stabilization. In Homo sapiens (Human), this protein is Fibronectin type III and SPRY domain-containing protein 1 (FSD1).